Reading from the N-terminus, the 347-residue chain is Phenylalanine--tRNA ligase alpha subunit (347 aa).

Glu-265 is a Mg(2+) binding site.

This sequence belongs to the class-II aminoacyl-tRNA synthetase family. Phe-tRNA synthetase alpha subunit type 1 subfamily. As to quaternary structure, tetramer of two alpha and two beta subunits. Mg(2+) is required as a cofactor.

The protein resides in the cytoplasm. The enzyme catalyses tRNA(Phe) + L-phenylalanine + ATP = L-phenylalanyl-tRNA(Phe) + AMP + diphosphate + H(+). The sequence is that of Phenylalanine--tRNA ligase alpha subunit from Wolbachia sp. subsp. Brugia malayi (strain TRS).